The sequence spans 438 residues: Metacaspase-1B (438 aa).

A disordered region spans residues 1–125 (MYYHHSHQGW…SQHFGRGAPS (125 aa)). The span at 29–38 (PYPYSSNAQY) shows a compositional bias: low complexity. Over residues 39–74 (QPPPGPPPTSHYAPPPGPPPSHYYPPPGSYPSPAPS) the composition is skewed to pro residues. Catalysis depends on residues histidine 222 and cysteine 278.

Belongs to the peptidase C14B family.

Involved in cell death (apoptosis). This is Metacaspase-1B (casB) from Aspergillus niger (strain ATCC MYA-4892 / CBS 513.88 / FGSC A1513).